The primary structure comprises 200 residues: MTTHRKPSQEQGFLNGQFLLAMPGMSDERFARSVVYICAHSGEGAMGFIINQLQPVQFPDLLRQIGVIGEEDLIILPDRAQHMVARNGGPVDRTRGFVLHSDDYMVDSTMPVSDDVCLTATVDILRAIYGGGGPERALMALGYSGWAPGQLEMEVAENGWLTCDAPLDMLFDSDIEGKYSRLMLHMGIDMSQLVSDAGHA.

The protein belongs to the UPF0301 (AlgH) family.

The sequence is that of UPF0301 protein BOV_0485 from Brucella ovis (strain ATCC 25840 / 63/290 / NCTC 10512).